We begin with the raw amino-acid sequence, 92 residues long: MVRSVWKGPFVEGSLLKKADAARASGRHDVIKIWSRRSTILPQFVGLTFGVYNGQKHVPVAVNEEMVGHKFGEFSPTRTFHGHSGDKKAKKA.

The protein belongs to the universal ribosomal protein uS19 family.

Protein S19 forms a complex with S13 that binds strongly to the 16S ribosomal RNA. This chain is Small ribosomal subunit protein uS19, found in Bradyrhizobium diazoefficiens (strain JCM 10833 / BCRC 13528 / IAM 13628 / NBRC 14792 / USDA 110).